Here is a 227-residue protein sequence, read N- to C-terminus: Phosphoglycolate phosphatase (227 aa).

Residue Asp-13 is the Nucleophile of the active site. Residues Asp-13, Asp-15, and Asp-176 each contribute to the Mg(2+) site.

Belongs to the HAD-like hydrolase superfamily. CbbY/CbbZ/Gph/YieH family. Mg(2+) serves as cofactor.

It catalyses the reaction 2-phosphoglycolate + H2O = glycolate + phosphate. It functions in the pathway organic acid metabolism; glycolate biosynthesis; glycolate from 2-phosphoglycolate: step 1/1. Specifically catalyzes the dephosphorylation of 2-phosphoglycolate. Is involved in the dissimilation of the intracellular 2-phosphoglycolate formed during the DNA repair of 3'-phosphoglycolate ends, a major class of DNA lesions induced by oxidative stress. The polypeptide is Phosphoglycolate phosphatase (Nitrosospira multiformis (strain ATCC 25196 / NCIMB 11849 / C 71)).